A 505-amino-acid polypeptide reads, in one-letter code: Maturase K (505 aa).

This sequence belongs to the intron maturase 2 family. MatK subfamily.

The protein resides in the plastid. It localises to the chloroplast. Its function is as follows. Usually encoded in the trnK tRNA gene intron. Probably assists in splicing its own and other chloroplast group II introns. In Nuphar advena (Common spatterdock), this protein is Maturase K.